Consider the following 101-residue polypeptide: UPF0213 protein VC0395_0675/VC395_A0575 (101 aa).

The GIY-YIG domain maps to serine 9–alanine 85.

Belongs to the UPF0213 family.

The protein is UPF0213 protein VC0395_0675/VC395_A0575 of Vibrio cholerae serotype O1 (strain ATCC 39541 / Classical Ogawa 395 / O395).